We begin with the raw amino-acid sequence, 80 residues long: uncharacterized protein (80 aa).

The signal sequence occupies residues 1 to 23; sequence MKWNNMLKAAGIAVLLFSVFAYA.

This is an uncharacterized protein from Bacillus subtilis (strain 168).